The primary structure comprises 229 residues: MAEESYDEECDYLFKAVLIGDSAVGKSNLLSRFSRDEFRLDSKPTIGVDFAYRNVRVGDKTIKAQIWDTAGQERFRAITSSYYRGALGALLIYDITRRITFKNIEKWLSELRGFSSPETVVVLVGNKSDLGQSREVEEEEGKTLAESEGLYFLETSALENQNVEEAFLSMIGRIHEVLTQKIVLDNRLNGDGNNESNGAVVPPGKEIVNIHEVTATRPLSTSLSNCCYK.

GTP is bound at residue 20–27 (GDSAVGKS). The Effector region signature appears at 42 to 50 (SKPTIGVDF). Residues 68-72 (DTAGQ), 126-129 (NKSD), and 156-157 (SA) contribute to the GTP site. 2 S-geranylgeranyl cysteine lipidation sites follow: Cys226 and Cys227.

It belongs to the small GTPase superfamily. Rab family.

It localises to the cell membrane. Intracellular vesicle trafficking and protein transport. This chain is Ras-related protein RABA6b (RABA6B), found in Arabidopsis thaliana (Mouse-ear cress).